Here is a 1041-residue protein sequence, read N- to C-terminus: Integrator complex subunit 3 (1041 aa).

Methionine 1 is modified (N-acetylmethionine). Phosphoserine is present on residues serine 500, serine 535, and serine 993. The segment at tyrosine 975–aspartate 1041 is disordered. Over residues alanine 1006–aspartate 1020 the composition is skewed to acidic residues.

It belongs to the Integrator subunit 3 family. Component of the Integrator complex, composed of core subunits INTS1, INTS2, INTS3, INTS4, INTS5, INTS6, INTS7, INTS8, INTS9/RC74, INTS10, INTS11/CPSF3L, INTS12, INTS13, INTS14 and INTS15. The core complex associates with protein phosphatase 2A subunits PPP2CA and PPP2R1A, to form the Integrator-PP2A (INTAC) complex. Component of the SOSS complex, composed of SOSS-B (SOSS-B1/NABP2 or SOSS-B2/NABP1), SOSS-A/INTS3 and SOSS-C/INIP. SOSS complexes containing SOSS-B1/NABP2 are more abundant than complexes containing SOSS-B2/NABP1. Interacts with SOSS-B1/NABP2, SOSS-B2/NABP1 and SOSS-C/INIP; the interaction is direct. Interacts with NBN/NBS1.

The protein localises to the nucleus. Its subcellular location is the cytoplasm. Component of the integrator complex, a multiprotein complex that terminates RNA polymerase II (Pol II) transcription in the promoter-proximal region of genes. The integrator complex provides a quality checkpoint during transcription elongation by driving premature transcription termination of transcripts that are unfavorably configured for transcriptional elongation: the complex terminates transcription by (1) catalyzing dephosphorylation of the C-terminal domain (CTD) of Pol II subunit POLR2A/RPB1 and SUPT5H/SPT5, (2) degrading the exiting nascent RNA transcript via endonuclease activity and (3) promoting the release of Pol II from bound DNA. The integrator complex is also involved in terminating the synthesis of non-coding Pol II transcripts, such as enhancer RNAs (eRNAs), small nuclear RNAs (snRNAs), telomerase RNAs and long non-coding RNAs (lncRNAs). Within the integrator complex, INTS3 is involved in the post-termination step: INTS3 binds INTS7 in the open conformation of integrator complex and prevents the rebinding of Pol II to the integrator after termination cycle. Mediates recruitment of cytoplasmic dynein to the nuclear envelope, probably as component of the integrator complex. In terms of biological role, component of the SOSS complex, a multiprotein complex that functions downstream of the MRN complex to promote DNA repair and G2/M checkpoint. The SOSS complex associates with single-stranded DNA at DNA lesions and influences diverse endpoints in the cellular DNA damage response including cell-cycle checkpoint activation, recombinational repair and maintenance of genomic stability. The SOSS complex is required for efficient homologous recombination-dependent repair of double-strand breaks (DSBs) and ATM-dependent signaling pathways. In the SOSS complex, it is required for the assembly of the complex and for stabilization of the complex at DNA damage sites. This Mus musculus (Mouse) protein is Integrator complex subunit 3 (Ints3).